A 149-amino-acid chain; its full sequence is uncharacterized protein (149 aa).

The disordered stretch occupies residues 1–103 (MFGLKVKNAE…SPTQGSRLRH (103 aa)). Over residues 7-18 (KNAEADTAKSNE) the composition is skewed to basic and acidic residues. Positions 26 to 41 (TGSSTTSGSGQSTQRG) are enriched in low complexity. Residues 61-72 (GSQGNSGDQGTE) are compositionally biased toward polar residues.

This sequence belongs to the adhesin P1 family.

This is an uncharacterized protein from Mycoplasma pneumoniae (strain ATCC 29342 / M129 / Subtype 1) (Mycoplasmoides pneumoniae).